Consider the following 222-residue polypeptide: Peptidyl-prolyl cis-trans isomerase FKBP7 (222 aa).

Positions 1 to 23 are cleaved as a signal peptide; the sequence is MPKTMHFLFRFIVFFYLWGLFTA. Asn-45 carries N-linked (GlcNAc...) asparagine glycosylation. The PPIase FKBP-type domain maps to 53–145; that stretch reads GDLLNAHYDG…IFEIELYAVT (93 aa). 2 consecutive EF-hand domains span residues 145–180 and 189–222; these read TKGP…EFEK and YQDA…HDEL. Positions 158, 160, 162, 164, 169, 202, 204, 206, and 213 each coordinate Ca(2+). Positions 200–222 are disordered; that stretch reads KNDHDGDGFISPKEYNVYQHDEL. The short motif at 219–222 is the Retention in the endoplasmic reticulum element; sequence HDEL.

Post-translationally, glycosylated.

The protein resides in the endoplasmic reticulum lumen. The catalysed reaction is [protein]-peptidylproline (omega=180) = [protein]-peptidylproline (omega=0). In terms of biological role, PPIases accelerate the folding of proteins during protein synthesis. The protein is Peptidyl-prolyl cis-trans isomerase FKBP7 (FKBP7) of Homo sapiens (Human).